A 267-amino-acid polypeptide reads, in one-letter code: UDP-glucose:undecaprenyl-phosphate glucose-1-phosphate transferase (267 aa).

A helical membrane pass occupies residues 83-103 (VAAALLTALFAPLLLLAALAI).

Belongs to the bacterial sugar transferase family.

The protein localises to the cell membrane. The catalysed reaction is di-trans,octa-cis-undecaprenyl phosphate + UDP-alpha-D-glucose = alpha-D-glucosyl di-trans,octa-cis-undecaprenyl diphosphate + UMP. Is likely the initiating enzyme for holdfast polysaccharide synthesis. Catalyzes the transfer of the glucose-1-phosphate moiety from UDP-Glc onto the carrier lipid undecaprenyl phosphate (C55-P), forming a phosphoanhydride bond yielding to glucosyl-pyrophosphoryl-undecaprenol (Glc-PP-C55). Also possesses a weak galactose-1-P transferase activity. The polypeptide is UDP-glucose:undecaprenyl-phosphate glucose-1-phosphate transferase (pssY) (Caulobacter vibrioides (strain ATCC 19089 / CIP 103742 / CB 15) (Caulobacter crescentus)).